The sequence spans 397 residues: Golgi-associated RAB2 interactor protein 2 (397 aa).

Disordered stretches follow at residues 1–24 and 342–397; these read MKKS…PDSK and QTTL…KLLN. 3 stretches are compositionally biased toward basic and acidic residues: residues 10 to 24, 353 to 369, and 376 to 397; these read TRID…PDSK, EKSK…RTMD, and KAEE…KLLN.

The protein belongs to the GARIN family. As to quaternary structure, interacts with CALM1.

It is found in the cell projection. Its subcellular location is the cilium. It localises to the flagellum. In terms of biological role, seems to play a role in sperm motility. The sequence is that of Golgi-associated RAB2 interactor protein 2 (GARIN2) from Bos taurus (Bovine).